The chain runs to 372 residues: MSSPEKKRKKNQKSSPNPSLPEDLIVSILARVSRSYYTNLSVVSKTFRSILTSPELYKTRTLLGKPETFLYVCLRFPDEANPRWLILYRKPNQTLTKKKKKKEDSSVHLLAPIPILNSPTVEWSSLVAVGSYLYAITADIKDSPCSNVWYLDCRTHTWLDSPRLRLAHINSDFNGRTYFPGSSEKPDSLNCVEVYNTNTQTWNPVPPQKRKLKFGNMEGKIYIPPCQENHRKAVALNPKVLTWEAVGLGTNLDRGSFCMIGNIAYCYDPSGKFRWMNCNTAEGDWSRLEGLEGLPKFARYSTVKLAEYGGKLVVLWDKYVAASGYKEKMIWCAEISLEKRNSEEIWGKVEWFDAVLTVPKSYKFVCAKSATV.

Residues 14-60 (SSPNPSLPEDLIVSILARVSRSYYTNLSVVSKTFRSILTSPELYKTR) form the F-box domain. The Kelch repeat unit spans residues 176–222 (RTYFPGSSEKPDSLNCVEVYNTNTQTWNPVPPQKRKLKFGNMEGKIY).

The polypeptide is F-box/kelch-repeat protein At5g48990 (Arabidopsis thaliana (Mouse-ear cress)).